The primary structure comprises 205 residues: Probable transcription factor Ken (205 aa).

3 C2H2-type zinc fingers span residues 106 to 128 (YRCE…LRVH), 134 to 157 (FACR…CSVH), and 173 to 196 (YSCC…SGHH).

It is found in the nucleus. In terms of biological role, probable transcription factor, which is required for terminalia development. This chain is Probable transcription factor Ken (ken), found in Drosophila yakuba (Fruit fly).